Here is a 751-residue protein sequence, read N- to C-terminus: ABC transporter G family member 22 (751 aa).

Residues 26-81 (ADIRSPHGSMDANGVPATAPAAVGGGGTLSRKSSRRLMGMSPGRSSGAGTHIRKSR) are disordered. The ABC transporter domain occupies 157–403 (LKFRDVTYKV…FSSIGCSPLI (247 aa)). 197–204 (GPSGSGKT) provides a ligand contact to ATP. Residues 498–707 (EQYCILFCRG…TYKLLLKVQY (210 aa)) enclose the ABC transmembrane type-2 domain. 6 consecutive transmembrane segments (helical) span residues 516-536 (FSWL…LLWW), 552-572 (LLFF…IFAF), 602-622 (LPLD…MTGL), 634-654 (LTVF…GAIL), 666-686 (VTVM…PVFI), and 722-742 (GLTE…LAYL).

This sequence belongs to the ABC transporter superfamily. ABCG family. Eye pigment precursor importer (TC 3.A.1.204) subfamily.

The protein resides in the membrane. The protein is ABC transporter G family member 22 (ABCG22) of Arabidopsis thaliana (Mouse-ear cress).